We begin with the raw amino-acid sequence, 96 residues long: Protein Vpr (96 aa).

Residues 1–42 form a homooligomerization region; sequence MEQAPEDQGPQREPYNEWTLELLEELKNEAVRHFPRPWLHGL. Position 79 is a phosphoserine; by host (S79).

Belongs to the HIV-1 VPR protein family. Homooligomer, may form homodimer. Interacts with p6-gag region of the Pr55 Gag precursor protein through a (Leu-X-X)4 motif near the C-terminus of the P6gag protein. Interacts with host UNG. May interact with host RAD23A/HHR23A. Interacts with host VPRBP/DCAF1, leading to hijack the CUL4A-RBX1-DDB1-DCAF1/VPRBP complex, mediating ubiquitination of host proteins such as TERT and ZGPAT and arrest of the cell cycle in G2 phase. Post-translationally, phosphorylated on several residues by host. These phosphorylations regulate VPR activity for the nuclear import of the HIV-1 pre-integration complex.

Its subcellular location is the virion. The protein resides in the host nucleus. It localises to the host extracellular space. In terms of biological role, during virus replication, may deplete host UNG protein, and incude G2-M cell cycle arrest. Acts by targeting specific host proteins for degradation by the 26S proteasome, through association with the cellular CUL4A-DDB1 E3 ligase complex by direct interaction with host VPRPB/DCAF-1. Cell cycle arrest reportedly occurs within hours of infection and is not blocked by antiviral agents, suggesting that it is initiated by the VPR carried into the virion. Additionally, VPR induces apoptosis in a cell cycle dependent manner suggesting that these two effects are mechanistically linked. Detected in the serum and cerebrospinal fluid of AIDS patient, VPR may also induce cell death to bystander cells. During virus entry, plays a role in the transport of the viral pre-integration (PIC) complex to the host nucleus. This function is crucial for viral infection of non-dividing macrophages. May act directly at the nuclear pore complex, by binding nucleoporins phenylalanine-glycine (FG)-repeat regions. This is Protein Vpr from Human immunodeficiency virus type 1 group M subtype G (isolate 92NG083) (HIV-1).